The primary structure comprises 145 residues: Late embryogenesis abundant protein D-11 (145 aa).

The segment covering 1 to 18 (MAHFQNQYSAPEVTQTDA) has biased composition (polar residues). Residues 1–136 (MAHFQNQYSA…EAPWSPQPLI (136 aa)) form a disordered region. A compositionally biased stretch (basic residues) spans 47–57 (GHHHGGHHGLH). Residues 58 to 68 (RTGSSSSSSSS) are compositionally biased toward low complexity. Basic and acidic residues predominate over residues 82–96 (KERLKEKIPGNKEHQ). The span at 97–107 (SQATSTTTPGQ) shows a compositional bias: polar residues.

Belongs to the plant dehydrin family.

LEA protein are late embryogenesis abundant in higher plant seed embryos. There are two subsets of LEA proteins (5a, and 5b), the first ones are expressed when the cotyledon weight reach 80 mg and the second set are expressed above 100 mg. The function of those proteins is not known. The sequence is that of Late embryogenesis abundant protein D-11 from Gossypium hirsutum (Upland cotton).